The following is a 258-amino-acid chain: tRNA pseudouridine synthase A (258 aa).

Residue aspartate 61 is the Nucleophile of the active site. Tyrosine 119 lines the substrate pocket.

Belongs to the tRNA pseudouridine synthase TruA family. In terms of assembly, homodimer.

It catalyses the reaction uridine(38/39/40) in tRNA = pseudouridine(38/39/40) in tRNA. In terms of biological role, formation of pseudouridine at positions 38, 39 and 40 in the anticodon stem and loop of transfer RNAs. This is tRNA pseudouridine synthase A from Chlorobium phaeobacteroides (strain DSM 266 / SMG 266 / 2430).